Reading from the N-terminus, the 216-residue chain is Protein YabP (216 aa).

This Escherichia coli (strain K12) protein is Protein YabP (yabP).